Consider the following 637-residue polypeptide: GTPase-activating protein GYP1 (637 aa).

Residues 1–17 show a composition bias toward basic and acidic residues; it reads MGVRSAAKEMHERDHNS. Disordered regions lie at residues 1 to 152 and 187 to 233; these read MGVR…GDRY and RTLS…NDSK. Over residues 18–27 the composition is skewed to polar residues; that stretch reads DSSSLVTSLM. Over residues 28-45 the composition is skewed to low complexity; it reads KSWRISSASSSKKPSLYK. Residues 46–59 are compositionally biased toward polar residues; the sequence is MNTTESTSLPSGYA. Serine 69 carries the phosphoserine modification. Polar residues-rich tracts occupy residues 79 to 91 and 98 to 107; these read QQAS…NSYS and PTLSTASNES. The segment covering 115-127 has biased composition (basic residues); it reads RQHHQRHHHHQQP. Low complexity-rich tracts occupy residues 128–142 and 187–207; these read RHSS…CSNS and RTLS…MGTS. Over residues 208–223 the composition is skewed to polar residues; that stretch reads AVRNSSSSFTYPQLPQ. The residue at position 250 (serine 250) is a Phosphoserine. Positions 280–508 constitute a Rab-GAP TBC domain; it reads GIPKIHRPVV…RMWDTYLSET (229 aa). Residues 543–564 form a disordered region; the sequence is DFQSPTTALSNMTPNNAVEDSG.

Its subcellular location is the golgi apparatus. The protein resides in the golgi stack. GTPase-activating protein (GAP) that stimulates specifically the intrinsic GTPase activity of Ypt/Rab-type GTPases YPT1 and YPT7. Functions on the Golgi as a negative regulator of YPT1. Functions on the vacuole as a negative regulator of YPT7. It is also active on SEC4 and YPT51. Provides a catalytic arginine (arginine finger) and glutamine (glutamine finger) in trans to accelerate the GTP hydrolysis rate of the substrate GTPase. The chain is GTPase-activating protein GYP1 (GYP1) from Saccharomyces cerevisiae (strain ATCC 204508 / S288c) (Baker's yeast).